We begin with the raw amino-acid sequence, 371 residues long: Cell division cycle-associated protein 7 (371 aa).

Disordered stretches follow at residues 60–110 and 140–188; these read TRSQ…EDES and PGSF…SRIL. Polar residues predominate over residues 94–103; that stretch reads PSENSVTDSN. A Phosphoserine modification is found at S142. An interaction with MYC region spans residues 146 to 170; the sequence is RHPLPGSDSQSRRPRRRTFPGVASR. The short motif at 160–176 is the Nuclear localization signal element; that stretch reads RRRTFPGVASRRNPERR. A Phosphothreonine modification is found at T163. S190 carries the phosphoserine modification. A Glycyl lysine isopeptide (Lys-Gly) (interchain with G-Cter in SUMO2) cross-link involves residue K204. A mediates transcriptional activity region spans residues 247-371; that stretch reads EEELENVCSN…SLKQEFEMQA (125 aa).

Interacts with MYC (via C-terminus), YWHAE and YWHAZ. Post-translationally, phosphorylation at Thr-163 promotes interaction with YWHAE and YWHAZ, dissociation from MYC and sequestration in the cytoplasm. In vitro, phosphorylated at Thr-163 by AKT. Ubiquitous with higher level in thymus and small intestine. Overexpressed in a large number of tumors, in blood from patients with acute myelogenous leukemia (AML) and in chronic myelogenous leukemia (CML) blast crisis.

The protein localises to the nucleus. The protein resides in the cytoplasm. In terms of biological role, participates in MYC-mediated cell transformation and apoptosis; induces anchorage-independent growth and clonogenicity in lymphoblastoid cells. Insufficient to induce tumorigenicity when overexpressed but contributes to MYC-mediated tumorigenesis. May play a role as transcriptional regulator. This Homo sapiens (Human) protein is Cell division cycle-associated protein 7 (CDCA7).